The sequence spans 260 residues: UPF0246 protein Cbei_1739 (260 aa).

This sequence belongs to the UPF0246 family.

The protein is UPF0246 protein Cbei_1739 of Clostridium beijerinckii (strain ATCC 51743 / NCIMB 8052) (Clostridium acetobutylicum).